Reading from the N-terminus, the 259-residue chain is Ribosomal RNA small subunit methyltransferase J (259 aa).

Residues 101–102 (RD), 117–118 (ER), 153–154 (SS), and aspartate 176 contribute to the S-adenosyl-L-methionine site.

Belongs to the methyltransferase superfamily. RsmJ family.

The protein localises to the cytoplasm. The catalysed reaction is guanosine(1516) in 16S rRNA + S-adenosyl-L-methionine = N(2)-methylguanosine(1516) in 16S rRNA + S-adenosyl-L-homocysteine + H(+). Specifically methylates the guanosine in position 1516 of 16S rRNA. This is Ribosomal RNA small subunit methyltransferase J from Vibrio vulnificus (strain YJ016).